The primary structure comprises 259 residues: Imidazole glycerol phosphate synthase subunit HisF (259 aa).

Residues aspartate 11 and aspartate 130 contribute to the active site.

This sequence belongs to the HisA/HisF family. In terms of assembly, heterodimer of HisH and HisF.

Its subcellular location is the cytoplasm. It carries out the reaction 5-[(5-phospho-1-deoxy-D-ribulos-1-ylimino)methylamino]-1-(5-phospho-beta-D-ribosyl)imidazole-4-carboxamide + L-glutamine = D-erythro-1-(imidazol-4-yl)glycerol 3-phosphate + 5-amino-1-(5-phospho-beta-D-ribosyl)imidazole-4-carboxamide + L-glutamate + H(+). Its pathway is amino-acid biosynthesis; L-histidine biosynthesis; L-histidine from 5-phospho-alpha-D-ribose 1-diphosphate: step 5/9. Its function is as follows. IGPS catalyzes the conversion of PRFAR and glutamine to IGP, AICAR and glutamate. The HisF subunit catalyzes the cyclization activity that produces IGP and AICAR from PRFAR using the ammonia provided by the HisH subunit. This chain is Imidazole glycerol phosphate synthase subunit HisF, found in Desulfosudis oleivorans (strain DSM 6200 / JCM 39069 / Hxd3) (Desulfococcus oleovorans).